A 227-amino-acid polypeptide reads, in one-letter code: MAHPAQLGFQDAASPIMEELMYFHDHTLMIVFLISSLVLYIISLMLTTELTHTSTMDAQEVETVWTILPAVILILIALPSLRILYMMDEITTPSLTLKTMGHQWYWSYEYTDYESLCFDSYMTPPLELDPGELRLLEVDNRVVLPTEMSIRMLISSEDVLHSWTVPSLGVKTDAIPGRLNQATLMTSRPGIYYGQCSEICGANHSFMPIVLELVPLKHFEEWLLSTL.

The Mitochondrial intermembrane portion of the chain corresponds to 1–14 (MAHPAQLGFQDAAS). A helical transmembrane segment spans residues 15–45 (PIMEELMYFHDHTLMIVFLISSLVLYIISLM). The Mitochondrial matrix portion of the chain corresponds to 46–59 (LTTELTHTSTMDAQ). The helical transmembrane segment at 60–87 (EVETVWTILPAVILILIALPSLRILYMM) threads the bilayer. The Mitochondrial intermembrane portion of the chain corresponds to 88–227 (DEITTPSLTL…HFEEWLLSTL (140 aa)). Cu cation is bound by residues His161, Cys196, Glu198, Cys200, His204, and Met207. Position 198 (Glu198) interacts with Mg(2+).

The protein belongs to the cytochrome c oxidase subunit 2 family. As to quaternary structure, component of the cytochrome c oxidase (complex IV, CIV), a multisubunit enzyme composed of 14 subunits. The complex is composed of a catalytic core of 3 subunits MT-CO1, MT-CO2 and MT-CO3, encoded in the mitochondrial DNA, and 11 supernumerary subunits COX4I, COX5A, COX5B, COX6A, COX6B, COX6C, COX7A, COX7B, COX7C, COX8 and NDUFA4, which are encoded in the nuclear genome. The complex exists as a monomer or a dimer and forms supercomplexes (SCs) in the inner mitochondrial membrane with NADH-ubiquinone oxidoreductase (complex I, CI) and ubiquinol-cytochrome c oxidoreductase (cytochrome b-c1 complex, complex III, CIII), resulting in different assemblies (supercomplex SCI(1)III(2)IV(1) and megacomplex MCI(2)III(2)IV(2)). Found in a complex with TMEM177, COA6, COX18, COX20, SCO1 and SCO2. Interacts with TMEM177 in a COX20-dependent manner. Interacts with COX20. Interacts with COX16. The cofactor is Cu cation.

Its subcellular location is the mitochondrion inner membrane. It catalyses the reaction 4 Fe(II)-[cytochrome c] + O2 + 8 H(+)(in) = 4 Fe(III)-[cytochrome c] + 2 H2O + 4 H(+)(out). Component of the cytochrome c oxidase, the last enzyme in the mitochondrial electron transport chain which drives oxidative phosphorylation. The respiratory chain contains 3 multisubunit complexes succinate dehydrogenase (complex II, CII), ubiquinol-cytochrome c oxidoreductase (cytochrome b-c1 complex, complex III, CIII) and cytochrome c oxidase (complex IV, CIV), that cooperate to transfer electrons derived from NADH and succinate to molecular oxygen, creating an electrochemical gradient over the inner membrane that drives transmembrane transport and the ATP synthase. Cytochrome c oxidase is the component of the respiratory chain that catalyzes the reduction of oxygen to water. Electrons originating from reduced cytochrome c in the intermembrane space (IMS) are transferred via the dinuclear copper A center (CU(A)) of subunit 2 and heme A of subunit 1 to the active site in subunit 1, a binuclear center (BNC) formed by heme A3 and copper B (CU(B)). The BNC reduces molecular oxygen to 2 water molecules using 4 electrons from cytochrome c in the IMS and 4 protons from the mitochondrial matrix. This Microcebus tavaratra (Northern rufous mouse lemur) protein is Cytochrome c oxidase subunit 2 (MT-CO2).